Here is a 221-residue protein sequence, read N- to C-terminus: Oligoribonuclease (221 aa).

Residues Leu-21–Leu-186 form the Exonuclease domain. Residue Tyr-143 is part of the active site.

This sequence belongs to the oligoribonuclease family.

It localises to the cytoplasm. Functionally, 3'-to-5' exoribonuclease specific for small oligoribonucleotides. This Corynebacterium efficiens (strain DSM 44549 / YS-314 / AJ 12310 / JCM 11189 / NBRC 100395) protein is Oligoribonuclease.